The chain runs to 750 residues: Nibrin (750 aa).

In terms of domain architecture, FHA spans 24-83 (YIVGRKNCAILIENDQSISRNHAVLRVNFPVTSLSQTDEIPTLTIKDNSKYGTFINEEKM). 2 BRCT domains span residues 105-181 (KFRV…SEFL) and 224-315 (GKTF…LAVI). The interval 111 to 328 (EPLVVCSSCL…TESYCNPQGQ (218 aa)) is mediates interaction with SP100. The interval 221-403 (IFKGKTFVFL…SRKLLQGTCN (183 aa)) is interaction with MTOR, MAPKAP1 and RICTOR. Thr337 is subject to Phosphothreonine. Position 343 is a phosphoserine; by ATM (Ser343). Phosphoserine is present on residues Ser347 and Ser433. Disordered stretches follow at residues 429–479 (NYQL…SSCK) and 494–550 (QPAG…RKRK). Residue Lys436 forms a Glycyl lysine isopeptide (Lys-Gly) (interchain with G-Cter in ubiquitin) linkage. Polar residues predominate over residues 446-457 (WSSQQQLNSIKN). The short motif at 461–467 (PCSRKRE) is the Nuclear localization signal element. Over residues 502–514 (KSKDHESQSETLD) the composition is skewed to basic and acidic residues. Residues Ser508 and Ser517 each carry the phosphoserine modification. Residue Lys528 forms a Glycyl lysine isopeptide (Lys-Gly) (interchain with G-Cter in SUMO2) linkage. The span at 540–550 (STEDLRARKRK) shows a compositional bias: basic and acidic residues. Glycyl lysine isopeptide (Lys-Gly) (interchain with G-Cter in SUMO2) cross-links involve residues Lys569 and Lys580. The span at 581–599 (QEADVSIRKKPRMDAERNQ) shows a compositional bias: basic and acidic residues. The segment at 581–622 (QEADVSIRKKPRMDAERNQHLNGGPVPESNSALQEDETGKKD) is disordered. Glycyl lysine isopeptide (Lys-Gly) (interchain with G-Cter in ubiquitin) cross-links involve residues Lys683, Lys687, and Lys732. The FxF/Y motif signature appears at 737 to 746 (ADDLFRYNPN).

It belongs to the Nibrin family. As to quaternary structure, component of the MRN complex composed of two heterodimers RAD50 and MRE11 associated with a single NBN. The MRN complexes dimerize on DNA to form joined MRN-MRN oligomers required for DNA double-strand break repair. The MRN complexes dimerize on DNA to form joined MRN-MRN oligomers required for DNA double-strand break repair. As part of the MRN complex, interacts with MCM9; the interaction recruits the complex to DNA repair sites. Component of the BASC complex, at least composed of BRCA1, MSH2, MSH6, MLH1, ATM, BLM, RAD50, MRE11 and NBN. Interacts with histone H2AX; this requires phosphorylation of H2AX on 'Ser-139' and promotes NBN recruitment to DNA damage sites. Interacts with (phosphorylated) MDC1; promoting NBN recruitment to DNA damage sites. Interacts with (phosphorylated) RAD17; promoting NBN recruitment to DNA damage sites. Interacts (via FxF/Y motif) with ATM. Interacts with HJURP. Interacts with INTS3. Interacts with KPNA2. Interacts with TERF2; interaction is disrupted upon NBN phosphorylation by CDK2. Interacts with (phosphorylated) RBBP8/CtIP; the interaction links the role of the MRN complex in DNA double-strand break sensing to resection. Interacts with SP100; recruits NBN to PML bodies. Interacts with ATF2. Interacts with MTOR, MAPKAP1 isoform 2 and RICTOR; indicative for an association with the mTORC2 complex. Interacts with MRNIP. Interacts with UFL1; promoting UFL1 recruitment to double-strand breaks following DNA damage. Interacts with CYREN (via XLF motif). Post-translationally, phosphorylated by ATM in response of ionizing radiation, and such phosphorylation is responsible intra-S phase checkpoint control and telomere maintenance. Phosphorylated at Ser-433 by CDK2 in S/G2 phases abolishes interaction with TERF2, enabling DCLRE1B/Apollo recruitment to telomeres. Phosphorylation at Ser-433 in response to dysfunctional telomeres promotes non-homologous end joining repair at telomeres, while dephosphorylation by PPP1CA promotes microhomology-mediated end-joining (MMEJ) repair. Ubiquitinated at Lys-436 via 'Lys-6'-linked ubiquitin chains by RNF8, promoting NBN recruitment to DNA double-strand breaks (DSBs). Ubiquitinated at Lys-687 via 'Lys-63'-linked ubiquitin chains by PELI1: ubiquitination takes place following PELI1 phosphorylation and promotes ATM activation and DNA repair. Ubiquitinated at Lys-732 via 'Lys-63'-linked ubiquitin chains by the SCF(SKP2) complex: ubiquitination takes place following SKP2 phosphorylation and promotes ATM activation and DNA repair. In terms of tissue distribution, present at approximately equal levels in the heart at fetal day 17, at relatively constant levels at postnatal days 10, 17 and 21 and at slightly lower levels in the adult heart. Barely detectable in the brain. Not detected in kidney, very low levels in liver and skeletal muscle and moderate levels in heart, lung and brain (at protein level).

The protein resides in the nucleus. Its subcellular location is the chromosome. The protein localises to the PML body. It is found in the telomere. In terms of biological role, component of the MRN complex, which plays a central role in double-strand break (DSB) repair, DNA recombination, maintenance of telomere integrity and meiosis. The MRN complex is involved in the repair of DNA double-strand breaks (DSBs) via homologous recombination (HR), an error-free mechanism which primarily occurs during S and G2 phases. The complex (1) mediates the end resection of damaged DNA, which generates proper single-stranded DNA, a key initial steps in HR, and is (2) required for the recruitment of other repair factors and efficient activation of ATM and ATR upon DNA damage. The MRN complex possesses single-strand endonuclease activity and double-strand-specific 3'-5' exonuclease activity, which are provided by MRE11, to initiate end resection, which is required for single-strand invasion and recombination. Within the MRN complex, NBN acts as a protein-protein adapter, which specifically recognizes and binds phosphorylated proteins, promoting their recruitment to DNA damage sites. Recruits MRE11 and RAD50 components of the MRN complex to DSBs in response to DNA damage. Promotes the recruitment of PI3/PI4-kinase family members ATM, ATR, and probably DNA-PKcs to the DNA damage sites, activating their functions. Mediates the recruitment of phosphorylated RBBP8/CtIP to DSBs, leading to cooperation between the MRN complex and RBBP8/CtIP to initiate end resection. RBBP8/CtIP specifically promotes the endonuclease activity of the MRN complex to clear DNA ends containing protein adducts. The MRN complex is also required for the processing of R-loops. NBN also functions in telomere length maintenance via its interaction with TERF2: interaction with TERF2 during G1 phase preventing recruitment of DCLRE1B/Apollo to telomeres. NBN also promotes DNA repair choice at dysfunctional telomeres: NBN phosphorylation by CK2 promotes non-homologous end joining repair at telomeres, while unphosphorylated NBN promotes microhomology-mediated end-joining (MMEJ) repair. Enhances AKT1 phosphorylation possibly by association with the mTORC2 complex. The chain is Nibrin (Nbn) from Rattus norvegicus (Rat).